We begin with the raw amino-acid sequence, 44 residues long: Photosystem I reaction center subunit IX (44 aa).

The chain crosses the membrane as a helical span at residues 7-27 (YLSTAPVLATLWFGSLAGLLI).

This sequence belongs to the PsaJ family.

Its subcellular location is the plastid. The protein resides in the chloroplast thylakoid membrane. Its function is as follows. May help in the organization of the PsaE and PsaF subunits. The chain is Photosystem I reaction center subunit IX from Cycas taitungensis (Prince sago).